Reading from the N-terminus, the 564-residue chain is Chaperonin GroEL 2 (564 aa).

ATP is bound by residues 29–32 (TIGP), 86–90 (DGTTT), Gly-413, and Asp-493. Residues 521–541 (DKPEPPAPAGDGGGDPMGGMG) are disordered. A compositionally biased stretch (gly residues) spans 530 to 541 (GDGGGDPMGGMG).

Belongs to the chaperonin (HSP60) family. In terms of assembly, forms a cylinder of 14 subunits composed of two heptameric rings stacked back-to-back. Interacts with the co-chaperonin GroES.

The protein resides in the cytoplasm. It catalyses the reaction ATP + H2O + a folded polypeptide = ADP + phosphate + an unfolded polypeptide.. Its function is as follows. Together with its co-chaperonin GroES, plays an essential role in assisting protein folding. The GroEL-GroES system forms a nano-cage that allows encapsulation of the non-native substrate proteins and provides a physical environment optimized to promote and accelerate protein folding. The chain is Chaperonin GroEL 2 from Prochlorococcus marinus (strain MIT 9303).